Reading from the N-terminus, the 101-residue chain is MEPVDPRLEPWKHPGSQPKTACTNCYCKKCCFHCQVCFTKKALGISYGRKKRRQRRRAHQDSQNHQASLSKQPSSQTRGDPTGPKEPKKEVEREAETDPLD.

Positions 1–24 are interaction with human CREBBP; the sequence is MEPVDPRLEPWKHPGSQPKTACTN. Residues 1 to 48 are transactivation; that stretch reads MEPVDPRLEPWKHPGSQPKTACTNCYCKKCCFHCQVCFTKKALGISYG. Positions 22, 25, and 27 each coordinate Zn(2+). The tract at residues 22–37 is cysteine-rich; the sequence is CTNCYCKKCCFHCQVC. K28 is subject to N6-acetyllysine; by host PCAF. Zn(2+) contacts are provided by C30, H33, C34, and C37. Residues 38-48 are core; it reads FTKKALGISYG. A disordered region spans residues 47-101; sequence YGRKKRRQRRRAHQDSQNHQASLSKQPSSQTRGDPTGPKEPKKEVEREAETDPLD. Residues 48-58 are compositionally biased toward basic residues; that stretch reads GRKKRRQRRRA. The Nuclear localization signal, RNA-binding (TAR), and protein transduction motif lies at 49-57; sequence RKKRRQRRR. The interval 49–86 is interaction with the host capping enzyme RNGTT; sequence RKKRRQRRRAHQDSQNHQASLSKQPSSQTRGDPTGPKE. K50 and K51 each carry N6-acetyllysine; by host EP300 and GCN5L2. An asymmetric dimethylarginine; by host PRMT6 mark is found at R52 and R53. Positions 61–79 are enriched in polar residues; sequence DSQNHQASLSKQPSSQTRG. K71 participates in a covalent cross-link: Glycyl lysine isopeptide (Lys-Gly) (interchain with G-Cter in ubiquitin). Positions 78-80 match the Cell attachment site motif; that stretch reads RGD. A compositionally biased stretch (basic and acidic residues) spans 83–101; that stretch reads GPKEPKKEVEREAETDPLD.

This sequence belongs to the lentiviruses Tat family. In terms of assembly, interacts with host CCNT1. Associates with the P-TEFb complex composed at least of Tat, P-TEFb (CDK9 and CCNT1), TAR RNA, RNA Pol II. Recruits the HATs CREBBP, TAF1/TFIID, EP300, PCAF and GCN5L2. Interacts with host KAT5/Tip60; this interaction targets the latter to degradation. Interacts with the host deacetylase SIRT1. Interacts with host capping enzyme RNGTT; this interaction stimulates RNGTT. Binds to host KDR, and to the host integrins ITGAV/ITGB3 and ITGA5/ITGB1. Interacts with host KPNB1/importin beta-1 without previous binding to KPNA1/importin alpha-1. Interacts with EIF2AK2. Interacts with host nucleosome assembly protein NAP1L1; this interaction may be required for the transport of Tat within the nucleus, since the two proteins interact at the nuclear rim. Interacts with host C1QBP/SF2P32; this interaction involves lysine-acetylated Tat. Interacts with the host chemokine receptors CCR2, CCR3 and CXCR4. Interacts with host DPP4/CD26; this interaction may trigger an anti-proliferative effect. Interacts with host LDLR. Interacts with the host extracellular matrix metalloproteinase MMP1. Interacts with host PRMT6; this interaction mediates Tat's methylation. Interacts with, and is ubiquitinated by MDM2/Hdm2. Interacts with host PSMC3 and HTATIP2. Interacts with STAB1; this interaction may overcome SATB1-mediated repression of IL2 and IL2RA (interleukin) in T cells by binding to the same domain than HDAC1. Interacts (when acetylated) with human CDK13, thereby increasing HIV-1 mRNA splicing and promoting the production of the doubly spliced HIV-1 protein Nef. Interacts with host TBP; this interaction modulates the activity of transcriptional pre-initiation complex. Interacts with host RELA. Interacts with host PLSCR1; this interaction negatively regulates Tat transactivation activity by altering its subcellular distribution. Post-translationally, asymmetrical arginine methylation by host PRMT6 seems to diminish the transactivation capacity of Tat and affects the interaction with host CCNT1. In terms of processing, acetylation by EP300, CREBBP, GCN5L2/GCN5 and PCAF regulates the transactivation activity of Tat. EP300-mediated acetylation of Lys-50 promotes dissociation of Tat from the TAR RNA through the competitive binding to PCAF's bromodomain. In addition, the non-acetylated Tat's N-terminus can also interact with PCAF. PCAF-mediated acetylation of Lys-28 enhances Tat's binding to CCNT1. Lys-50 is deacetylated by SIRT1. Polyubiquitination by host MDM2 does not target Tat to degradation, but activates its transactivation function and fosters interaction with CCNT1 and TAR RNA. Post-translationally, phosphorylated by EIF2AK2 on serine and threonine residues adjacent to the basic region important for TAR RNA binding and function. Phosphorylation of Tat by EIF2AK2 is dependent on the prior activation of EIF2AK2 by dsRNA.

Its subcellular location is the host nucleus. The protein localises to the host nucleolus. It localises to the host cytoplasm. The protein resides in the secreted. Transcriptional activator that increases RNA Pol II processivity, thereby increasing the level of full-length viral transcripts. Recognizes a hairpin structure at the 5'-LTR of the nascent viral mRNAs referred to as the transactivation responsive RNA element (TAR) and recruits the cyclin T1-CDK9 complex (P-TEFb complex) that will in turn hyperphosphorylate the RNA polymerase II to allow efficient elongation. The CDK9 component of P-TEFb and other Tat-activated kinases hyperphosphorylate the C-terminus of RNA Pol II that becomes stabilized and much more processive. Other factors such as HTATSF1/Tat-SF1, SUPT5H/SPT5, and HTATIP2 are also important for Tat's function. Besides its effect on RNA Pol II processivity, Tat induces chromatin remodeling of proviral genes by recruiting the histone acetyltransferases (HATs) CREBBP, EP300 and PCAF to the chromatin. This also contributes to the increase in proviral transcription rate, especially when the provirus integrates in transcriptionally silent region of the host genome. To ensure maximal activation of the LTR, Tat mediates nuclear translocation of NF-kappa-B by interacting with host RELA. Through its interaction with host TBP, Tat may also modulate transcription initiation. Tat can reactivate a latently infected cell by penetrating in it and transactivating its LTR promoter. In the cytoplasm, Tat is thought to act as a translational activator of HIV-1 mRNAs. In terms of biological role, extracellular circulating Tat can be endocytosed by surrounding uninfected cells via the binding to several surface receptors such as CD26, CXCR4, heparan sulfate proteoglycans (HSPG) or LDLR. Neurons are rarely infected, but they internalize Tat via their LDLR. Through its interaction with nuclear HATs, Tat is potentially able to control the acetylation-dependent cellular gene expression. Modulates the expression of many cellular genes involved in cell survival, proliferation or in coding for cytokines or cytokine receptors. Tat plays a role in T-cell and neurons apoptosis. Tat induced neurotoxicity and apoptosis probably contribute to neuroAIDS. Circulating Tat also acts as a chemokine-like and/or growth factor-like molecule that binds to specific receptors on the surface of the cells, affecting many cellular pathways. In the vascular system, Tat binds to ITGAV/ITGB3 and ITGA5/ITGB1 integrins dimers at the surface of endothelial cells and competes with bFGF for heparin-binding sites, leading to an excess of soluble bFGF. This is Protein Tat from Homo sapiens (Human).